The primary structure comprises 185 residues: Sarcoplasmic calcium-binding proteins I, III, and IV (185 aa).

EF-hand domains follow at residues 5–41, 57–92, 102–137, and 138–173; these read FQKQKIKFTFDFFLDYNKDGSIQWEDFEEMIKRYKEV, SLEDEWRDLKGRADINKDDVVSWEEYLAMWEKTIAT, WCQNRIPFLFKGMDVSGDGIVDLEEFQNYCKNFQLQ, and CADVPAVYNVITDGGKVTFDLNRYKELYYRLLTSPA. Ca(2+)-binding residues include aspartate 19, asparagine 21, aspartate 23, serine 25, aspartate 30, aspartate 70, asparagine 72, aspartate 74, glutamate 81, aspartate 115, serine 117, aspartate 119, and glutamate 126.

Like parvalbumins, SCPs seem to be more abundant in fast contracting muscles, but no functional relationship can be established from this distribution. The polypeptide is Sarcoplasmic calcium-binding proteins I, III, and IV (Branchiostoma lanceolatum (Common lancelet)).